A 444-amino-acid chain; its full sequence is L-cysteine:1D-myo-inositol 2-amino-2-deoxy-alpha-D-glucopyranoside ligase (444 aa).

Positions 1-13 are enriched in basic and acidic residues; that stretch reads MPCDRKTSPDQHH. The interval 1-21 is disordered; that stretch reads MPCDRKTSPDQHHALQIHRHH. Cysteine 75 contacts Zn(2+). L-cysteinyl-5'-AMP is bound by residues 75–78, threonine 90, and 113–115; these read CGIT and NIT. The 'HIGH' region signature appears at 77–87; sequence ITPYDATHLGH. Positions 219 to 224 match the 'ERGGDP' region motif; sequence ERGGDP. Tryptophan 259 contributes to the L-cysteinyl-5'-AMP binding site. Cysteine 263 serves as a coordination point for Zn(2+). Residue 281–283 coordinates L-cysteinyl-5'-AMP; sequence GSD. Histidine 288 provides a ligand contact to Zn(2+). Position 315 (isoleucine 315) interacts with L-cysteinyl-5'-AMP. Positions 321–325 match the 'KMSKS' region motif; that stretch reads KMSKS.

It belongs to the class-I aminoacyl-tRNA synthetase family. MshC subfamily. In terms of assembly, monomer. Zn(2+) serves as cofactor.

The enzyme catalyses 1D-myo-inositol 2-amino-2-deoxy-alpha-D-glucopyranoside + L-cysteine + ATP = 1D-myo-inositol 2-(L-cysteinylamino)-2-deoxy-alpha-D-glucopyranoside + AMP + diphosphate + H(+). Its function is as follows. Catalyzes the ATP-dependent condensation of GlcN-Ins and L-cysteine to form L-Cys-GlcN-Ins. The sequence is that of L-cysteine:1D-myo-inositol 2-amino-2-deoxy-alpha-D-glucopyranoside ligase from Mycolicibacterium gilvum (strain PYR-GCK) (Mycobacterium gilvum (strain PYR-GCK)).